The chain runs to 159 residues: Ribosomal RNA large subunit methyltransferase H (159 aa).

S-adenosyl-L-methionine is bound by residues leucine 76, glycine 108, and 127–132; that span reads FGKLTL.

It belongs to the RNA methyltransferase RlmH family. As to quaternary structure, homodimer.

It localises to the cytoplasm. It carries out the reaction pseudouridine(1915) in 23S rRNA + S-adenosyl-L-methionine = N(3)-methylpseudouridine(1915) in 23S rRNA + S-adenosyl-L-homocysteine + H(+). Its function is as follows. Specifically methylates the pseudouridine at position 1915 (m3Psi1915) in 23S rRNA. The sequence is that of Ribosomal RNA large subunit methyltransferase H from Streptococcus sanguinis (strain SK36).